A 156-amino-acid polypeptide reads, in one-letter code: V-type sodium ATPase subunit K (156 aa).

4 helical membrane-spanning segments follow: residues 11–31, 60–80, 89–109, and 132–152; these read GMVF…IGSA, LLPG…FINL, GLNF…SGIA, and IIFA…SFLL.

This sequence belongs to the V-ATPase proteolipid subunit family. The N-terminus is blocked.

The protein localises to the cell membrane. Its function is as follows. Involved in ATP-driven sodium extrusion. The sequence is that of V-type sodium ATPase subunit K (ntpK) from Enterococcus hirae (strain ATCC 9790 / DSM 20160 / JCM 8729 / LMG 6399 / NBRC 3181 / NCIMB 6459 / NCDO 1258 / NCTC 12367 / WDCM 00089 / R).